A 350-amino-acid chain; its full sequence is RNA 3'-terminal phosphate cyclase (350 aa).

ATP contacts are provided by residues Gln-107 and 290 to 294; that span reads FLGDQ. The active-site Tele-AMP-histidine intermediate is His-316.

This sequence belongs to the RNA 3'-terminal cyclase family. Type 1 subfamily.

The protein localises to the cytoplasm. The enzyme catalyses a 3'-end 3'-phospho-ribonucleotide-RNA + ATP = a 3'-end 2',3'-cyclophospho-ribonucleotide-RNA + AMP + diphosphate. Functionally, catalyzes the conversion of 3'-phosphate to a 2',3'-cyclic phosphodiester at the end of RNA. The mechanism of action of the enzyme occurs in 3 steps: (A) adenylation of the enzyme by ATP; (B) transfer of adenylate to an RNA-N3'P to produce RNA-N3'PP5'A; (C) and attack of the adjacent 2'-hydroxyl on the 3'-phosphorus in the diester linkage to produce the cyclic end product. The biological role of this enzyme is unknown but it is likely to function in some aspects of cellular RNA processing. In Gloeothece citriformis (strain PCC 7424) (Cyanothece sp. (strain PCC 7424)), this protein is RNA 3'-terminal phosphate cyclase.